The sequence spans 193 residues: Outer membrane lipoprotein DolP (193 aa).

The signal sequence occupies residues 1 to 21 (MTLSPLKKLAILLGATIFLQG). A lipid anchor (N-palmitoyl cysteine) is attached at Cys22. Cys22 is lipidated: S-diacylglycerol cysteine. 2 BON domains span residues 48–117 (DDET…TVSP) and 126–193 (KDSW…KYLD).

It belongs to the lipoprotein DolP family.

The protein resides in the cell outer membrane. Plays an important role in maintaining outer membrane integrity. The protein is Outer membrane lipoprotein DolP of Haemophilus influenzae (strain ATCC 51907 / DSM 11121 / KW20 / Rd).